The following is a 674-amino-acid chain: Secretin GspD (674 aa).

The N-terminal stretch at 1-24 is a signal peptide; that stretch reads MKYWLKKSSWLLAGSLLSTPLAMA. Residues 25–121 are N0; the sequence is NEFSASFKGT…VLSGEERANG (97 aa). The N1 stretch occupies residues 123–187; it reads EVITQVVAVK…EIIRRVDQAG (65 aa). Residues 188 to 261 form an N2 region; it reads DKEIEVVELN…LIKQLDVEMA (74 aa). The N3 stretch occupies residues 264-338; that stretch reads GNNRVVYLKY…AMLEVIGQLD (75 aa). Residues 343-612 form a secretin region; sequence QVLIEALIVE…VFIKPTIIRD (270 aa). Positions 395 to 417 are cap gate; the sequence is DTTQTKAVYDTNNNFLRNETTTT. Positions 614–674 are s domain; it reads VTADGITQRK…AFIEQMEAKQ (61 aa).

The protein belongs to the bacterial secretin family. GSP D subfamily. In terms of assembly, forms a cylindrical channel with 15 subunits; unlike E.coli no 16-subunit channels are seen. The closed pentadeacameric channels are 195 Angstroms long and 145 Angstroms in diameter. Each subunit turns in a clock-wise manner around the channel.

Its subcellular location is the cell outer membrane. Its function is as follows. Involved in a type II secretion system (T2SS, formerly general secretion pathway, GSP) for the export of proteins. Required for secretion of cholera toxin through the outer membrane. This subunit forms the outer membrane channel. This chain is Secretin GspD (epsD), found in Vibrio cholerae serotype O1 (strain ATCC 39315 / El Tor Inaba N16961).